The following is a 142-amino-acid chain: Prefoldin subunit alpha 2 (142 aa).

It belongs to the prefoldin subunit alpha family. In terms of assembly, heterohexamer of two alpha and four beta subunits.

Its subcellular location is the cytoplasm. Molecular chaperone capable of stabilizing a range of proteins. Seems to fulfill an ATP-independent, HSP70-like function in archaeal de novo protein folding. In Thermococcus kodakarensis (strain ATCC BAA-918 / JCM 12380 / KOD1) (Pyrococcus kodakaraensis (strain KOD1)), this protein is Prefoldin subunit alpha 2.